Consider the following 254-residue polypeptide: 5'-nucleotidase SurE (254 aa).

Residues Asp8, Asp9, Ser40, and Asn93 each coordinate a divalent metal cation.

This sequence belongs to the SurE nucleotidase family. A divalent metal cation serves as cofactor.

It is found in the cytoplasm. The catalysed reaction is a ribonucleoside 5'-phosphate + H2O = a ribonucleoside + phosphate. In terms of biological role, nucleotidase that shows phosphatase activity on nucleoside 5'-monophosphates. The sequence is that of 5'-nucleotidase SurE from Methylorubrum populi (strain ATCC BAA-705 / NCIMB 13946 / BJ001) (Methylobacterium populi).